A 271-amino-acid chain; its full sequence is Large ribosomal subunit protein uL18 (271 aa).

Positions isoleucine 245–arginine 264 are enriched in basic and acidic residues. Residues isoleucine 245 to leucine 271 form a disordered region.

Belongs to the universal ribosomal protein uL18 family. Component of the large ribosomal subunit (LSU).

The protein resides in the cytoplasm. The protein localises to the nucleus. In terms of biological role, component of the ribosome, a large ribonucleoprotein complex responsible for the synthesis of proteins in the cell. The small ribosomal subunit (SSU) binds messenger RNAs (mRNAs) and translates the encoded message by selecting cognate aminoacyl-transfer RNA (tRNA) molecules. The large subunit (LSU) contains the ribosomal catalytic site termed the peptidyl transferase center (PTC), which catalyzes the formation of peptide bonds, thereby polymerizing the amino acids delivered by tRNAs into a polypeptide chain. The nascent polypeptides leave the ribosome through a tunnel in the LSU and interact with protein factors that function in enzymatic processing, targeting, and the membrane insertion of nascent chains at the exit of the ribosomal tunnel. This is Large ribosomal subunit protein uL18 (RPL5) from Dunaliella salina (Green alga).